The chain runs to 2655 residues: Probable polyketide synthase 42 (2655 aa).

Positions 16 to 445 (QNGVAVIGVG…GSNCCIILSE (430 aa)) constitute a Ketosynthase family 3 (KS3) domain. Residues cysteine 186, histidine 325, and histidine 368 each act as for beta-ketoacyl synthase activity in the active site. The segment at 634-667 (GIKSDIMVGHSFGEIACSYCSGMVDFKTLCYLTY) is acyl/malonyl transferase. Serine 644 acts as the For acyl/malonyl transferase activity in catalysis. The tract at residues 926 to 1059 (HPTWKKANKN…ANYSLFKHND (134 aa)) is N-terminal hotdog fold. One can recognise a PKS/mFAS DH domain in the interval 926 to 1234 (HPTWKKANKN…CKSSIPIIDS (309 aa)). Histidine 970 functions as the Proton acceptor; for dehydratase activity in the catalytic mechanism. The tract at residues 1074–1234 (NYTIISKDEL…CKSSIPIIDS (161 aa)) is C-terminal hotdog fold. Aspartate 1146 serves as the catalytic Proton donor; for dehydratase activity. The disordered stretch occupies residues 1700–1719 (YNNNNNNNNNNNNNNNNNNN). Positions 2517-2594 (NENNNIGDLL…TTIEIIIKGY (78 aa)) constitute a Carrier domain. Serine 2554 carries the O-(pantetheine 4'-phosphoryl)serine modification. Residues 2612 to 2655 (SVVQKETIKDNNENKDDIKIDMDDKKENLKGKKENIDDKKENNN) form a disordered region. Residues 2617 to 2655 (ETIKDNNENKDDIKIDMDDKKENLKGKKENIDDKKENNN) show a composition bias toward basic and acidic residues. The stretch at 2618–2655 (TIKDNNENKDDIKIDMDDKKENLKGKKENIDDKKENNN) forms a coiled coil.

Pantetheine 4'-phosphate serves as cofactor.

Its function is as follows. Probable polyketide synthase. In Dictyostelium discoideum (Social amoeba), this protein is Probable polyketide synthase 42 (pks42).